The sequence spans 195 residues: Peptidyl-tRNA hydrolase (195 aa).

TRNA is bound at residue Tyr18. The active-site Proton acceptor is the His23. The tRNA site is built by Phe69, Asn71, and Asn117.

It belongs to the PTH family. In terms of assembly, monomer.

Its subcellular location is the cytoplasm. The enzyme catalyses an N-acyl-L-alpha-aminoacyl-tRNA + H2O = an N-acyl-L-amino acid + a tRNA + H(+). In terms of biological role, hydrolyzes ribosome-free peptidyl-tRNAs (with 1 or more amino acids incorporated), which drop off the ribosome during protein synthesis, or as a result of ribosome stalling. Its function is as follows. Catalyzes the release of premature peptidyl moieties from peptidyl-tRNA molecules trapped in stalled 50S ribosomal subunits, and thus maintains levels of free tRNAs and 50S ribosomes. In Alcanivorax borkumensis (strain ATCC 700651 / DSM 11573 / NCIMB 13689 / SK2), this protein is Peptidyl-tRNA hydrolase.